Consider the following 896-residue polypeptide: DNA double-strand break repair Rad50 ATPase (896 aa).

ATP contacts are provided by residues Asn32 to Ser38 and Gln137. Coiled coils occupy residues Arg200 to Glu274, Glu412 to Met505, Ile580 to Phe611, Ile636 to Arg669, and Arg702 to Lys731. The Zinc-hook domain maps to Tyr411 to Ser507. Residues Cys455 and Cys458 each contribute to the Zn(2+) site.

This sequence belongs to the SMC family. RAD50 subfamily. As to quaternary structure, homodimer. Forms a heterotetramer composed of two Mre11 subunits and two Rad50 subunits. It depends on Zn(2+) as a cofactor.

Part of the Rad50/Mre11 complex, which is involved in the early steps of DNA double-strand break (DSB) repair. The complex may facilitate opening of the processed DNA ends to aid in the recruitment of HerA and NurA. Rad50 controls the balance between DNA end bridging and DNA resection via ATP-dependent structural rearrangements of the Rad50/Mre11 complex. In Thermoplasma acidophilum (strain ATCC 25905 / DSM 1728 / JCM 9062 / NBRC 15155 / AMRC-C165), this protein is DNA double-strand break repair Rad50 ATPase.